Consider the following 242-residue polypeptide: 1-(5-phosphoribosyl)-5-[(5-phosphoribosylamino)methylideneamino] imidazole-4-carboxamide isomerase (242 aa).

The Proton acceptor role is filled by D10. The active-site Proton donor is the D132.

It belongs to the HisA/HisF family.

Its subcellular location is the cytoplasm. The catalysed reaction is 1-(5-phospho-beta-D-ribosyl)-5-[(5-phospho-beta-D-ribosylamino)methylideneamino]imidazole-4-carboxamide = 5-[(5-phospho-1-deoxy-D-ribulos-1-ylimino)methylamino]-1-(5-phospho-beta-D-ribosyl)imidazole-4-carboxamide. It functions in the pathway amino-acid biosynthesis; L-histidine biosynthesis; L-histidine from 5-phospho-alpha-D-ribose 1-diphosphate: step 4/9. The sequence is that of 1-(5-phosphoribosyl)-5-[(5-phosphoribosylamino)methylideneamino] imidazole-4-carboxamide isomerase from Methanopyrus kandleri (strain AV19 / DSM 6324 / JCM 9639 / NBRC 100938).